A 501-amino-acid polypeptide reads, in one-letter code: MKKKSNHLKGRKVLVSLLVSLQVFAFASISSAAPTEPNDIDMGIAGLNYNRNEVLAIQGDQISSFVPKEGIQSNGKFIVVERDKKSLTTSPVDISIVDSITNRTYPGAIQLANKDFADNQPSLVMAARKPLDISIDLPGLKNENTISVQNPNYGTVSSAIDQLVSTWGEKYSSTHTLPARLQYAESMVYSQNQISSALNVNAKVLNGTLGIDFNAVANGEKKVMVAAYKQIFYTVSAGLPNNPSDLFDDSVTFAELARKGVSNEAPPLMVSNVAYGRTIYVKLETTSKSNDVQTAFKLLLNNPSIQASGQYKDIYENSSFTAVVLGGDAQTHNQVVTKDFNVIQSVIKDNAQFSSKNPAYPISYTSVFLKDNSIAAVHNNTEYIETKTTEYSKGKIKLDHSGAYVAQFEVYWDEFSYDADGQEIVTRKSWDGNWRDRSAHFSTEIPLPPNAKNIRIFARECTGLAWEWWRTVVDEYNVPLASDINVSIWGTTLYPKSSITH.

Residues 1-32 form the signal peptide; sequence MKKKSNHLKGRKVLVSLLVSLQVFAFASISSA. 4 beta stranded membrane passes run 191–204, 211–220, 289–298, and 306–318; these read QNQI…NAKV, IDFNAVANGE, SNDVQTAFKL, and QASG…YENS. Residues 460–470 carry the Conserved undecapeptide motif; it reads ECTGLAWEWWR. A Cholesterol binding motif is present at residues 492–493; it reads TL.

It belongs to the cholesterol-dependent cytolysin family. Homooligomeric pore complex of 35 to 50 subunits; when inserted in the host membrane.

It is found in the secreted. The protein localises to the host cell membrane. With respect to regulation, inhibited by cholesterol and thiol reagents. A cholesterol-dependent toxin that causes cytolysis by forming pores in cholesterol containing host membranes. After binding to target membranes, the protein undergoes a major conformation change, leading to its insertion in the host membrane and formation of an oligomeric pore complex. Cholesterol is required for binding to host cell membranes, membrane insertion and pore formation; cholesterol binding is mediated by a Thr-Leu pair in the C-terminus. Can be reversibly inactivated by oxidation. The protein is Alveolysin (alv) of Paenibacillus alvei (Bacillus alvei).